Consider the following 525-residue polypeptide: GMP synthase [glutamine-hydrolyzing] (525 aa).

The region spanning 9–207 (RILILDFGSQ…VHEICGCPAD (199 aa)) is the Glutamine amidotransferase type-1 domain. Cys86 acts as the Nucleophile in catalysis. Catalysis depends on residues His181 and Glu183. One can recognise a GMPS ATP-PPase domain in the interval 208–400 (WTPGNIVDDL…LGLPADMVYR (193 aa)). 235–241 (SGGVDSS) is an ATP binding site.

Homodimer.

The catalysed reaction is XMP + L-glutamine + ATP + H2O = GMP + L-glutamate + AMP + diphosphate + 2 H(+). It functions in the pathway purine metabolism; GMP biosynthesis; GMP from XMP (L-Gln route): step 1/1. Functionally, catalyzes the synthesis of GMP from XMP. The chain is GMP synthase [glutamine-hydrolyzing] from Alkalilimnicola ehrlichii (strain ATCC BAA-1101 / DSM 17681 / MLHE-1).